Consider the following 88-residue polypeptide: Apolipoprotein C-I (88 aa).

The first 26 residues, 1–26 (MRLFISLPILIVVLAMALEGPAPAQA), serve as a signal peptide directing secretion.

It belongs to the apolipoprotein C1 family.

Its subcellular location is the secreted. Inhibitor of lipoprotein binding to the low density lipoprotein (LDL) receptor, LDL receptor-related protein, and very low density lipoprotein (VLDL) receptor. Associates with high density lipoproteins (HDL) and the triacylglycerol-rich lipoproteins in the plasma and makes up about 10% of the protein of the VLDL and 2% of that of HDL. Appears to interfere directly with fatty acid uptake and is also the major plasma inhibitor of cholesteryl ester transfer protein (CETP). Modulates the interaction of APOE with beta-migrating VLDL and inhibits binding of beta-VLDL to the LDL receptor-related protein. Binds free fatty acids and reduces their intracellular esterification. This chain is Apolipoprotein C-I (Apoc1), found in Neotoma lepida (Desert woodrat).